The chain runs to 552 residues: MPSGRLQQQFIRLWQCCDGKTQDTTLNELADLLNCSRRHMRTLLNTMQARGWLTWEAEVGRGKRSRLTFLYTGLALQQQRAEDLLEQDRIDQLVQLVGDKSAVRQMLISHLGRSFRQGRHILRVLYYRPMHNLLPGTALRRSETHIARQIFSSLTRVNEENGELEADIAHHWQQISPLLWRFYLRPGIHFHHGRELEMEDVIASLTRINTLPLYSHITKIDSPTAWTLDIHLSQPDRWLPWLLGQVPAMILPREWETLANFASHPIGTGPYAVRRNTPNQLKILAFDDYFGYRALIDEVNVWVLPDISEEPACGLMLEGPIQGGEKAIESRLEEGCYYLLFDARTPRGAHPQVREWVSHVLSPTNLLYHADEPLQQLWFPAYGLLPRWHHARPGPGEKPAGLETLTLTFYREHIEHRVIARIMSALLAEHQVHLHIQEIDYDQWHAGEIESDIWLNSANFTLPLDFSLFAHLCEVPLLQNCIPRDWQDDAAQWRAGEMNLANWCQQLLANKAIVPLIHHWLIIQGQRSMRGLRMNTLGWFDFKSAWFAPPDP.

The 116-residue stretch at 1-116 (MPSGRLQQQF…LISHLGRSFR (116 aa)) folds into the HTH marR-type domain. The segment at residues 26-49 (LNELADLLNCSRRHMRTLLNTMQA) is a DNA-binding region (H-T-H motif). The interval 163–493 (ELEADIAHHW…RDWQDDAAQW (331 aa)) is solute-binding.

Its function is as follows. Activates the small RNA gene sgrS under glucose-phosphate stress conditions as well as yfdZ. Represses its own transcription under both stress and non-stress conditions. Might act as a sensor of the intracellular accumulation of phosphoglucose by binding these molecules in its C-terminal solute-binding domain. This chain is HTH-type transcriptional regulator SgrR, found in Salmonella typhi.